The following is a 357-amino-acid chain: Trans-acting factor B (357 aa).

The tract at residues 226–257 (DDNDLEEEERNASGEQTTTAREESEALDTTSN) is disordered.

In terms of biological role, plasmid partition require REP1, REP2, and a cis-acting DNA sequence (known as STB). REP1 may act by intercalating in the yeast nuclear matrix and binding STB either directly or via REP2. The sequence is that of Trans-acting factor B (B) from Zygosaccharomyces bailii.